Reading from the N-terminus, the 412-residue chain is Putative potassium channel protein RPA4233 (412 aa).

5 consecutive transmembrane segments (helical) span residues 35–55 (FIVFFIVLSVGITVMESVPAM), 65–85 (ALELLCLVMFSIEYYIRIWIA), 164–184 (LMACLVILACATLVSATAMHI), 202–222 (WWAIVTLSTIGYGDVVPATGI), and 225–245 (MVASATIICGLIMIALPVGIV). The Selectivity filter motif lies at 210–215 (TIGYGD). 270-388 (LFSHLTAGDI…RKINQIVEGR (119 aa)) is a binding site for a nucleoside 3',5'-cyclic phosphate.

This sequence belongs to the potassium channel family.

The protein resides in the cell membrane. In Rhodopseudomonas palustris (strain ATCC BAA-98 / CGA009), this protein is Putative potassium channel protein RPA4233.